The primary structure comprises 265 residues: Undecaprenyl-diphosphatase (265 aa).

A run of 8 helical transmembrane segments spans residues 15 to 37 (GLTEFLPVSSTGHLIITGYLLEY), 41 to 61 (KAESFQVAIQLGAILAVVFLY), 85 to 105 (YLLALTSAPASVLGLLTHSFI), 109 to 129 (LFGPVTVAWALAAGALYILAV), 144 to 164 (VSPALALGIGMFQCLALWPGF), 183 to 203 (LAAEYSFVAAVPIMFAATGYD), 218 to 238 (FWAVGLLVSFASAWAAVKGFI), and 244 to 264 (VTFRPFAWYRLALAPVVLLFW).

It belongs to the UppP family.

It is found in the cell inner membrane. The enzyme catalyses di-trans,octa-cis-undecaprenyl diphosphate + H2O = di-trans,octa-cis-undecaprenyl phosphate + phosphate + H(+). In terms of biological role, catalyzes the dephosphorylation of undecaprenyl diphosphate (UPP). Confers resistance to bacitracin. The polypeptide is Undecaprenyl-diphosphatase (Oleidesulfovibrio alaskensis (strain ATCC BAA-1058 / DSM 17464 / G20) (Desulfovibrio alaskensis)).